The chain runs to 2025 residues: Pericentriolar material 1 protein (2025 aa).

The segment at Met-1–Gln-91 is disordered. Ala-2 bears the N-acetylalanine mark. A mediates interaction with DZIP1 region spans residues Ala-2 to Thr-1458. Residues Ser-65, Ser-68, Ser-69, Ser-93, Ser-110, Ser-116, Ser-119, and Ser-159 each carry the phosphoserine modification. The disordered stretch occupies residues Asp-111–Pro-140. Over residues Ser-116–Arg-132 the composition is skewed to polar residues. Residues Lys-218–Ala-301 are a coiled coil. The segment at Arg-354 to Pro-390 is disordered. Over residues Glu-369–Val-385 the composition is skewed to polar residues. Ser-370 is subject to Phosphoserine. Ser-372 is modified (phosphoserine; by PLK4). Position 384 is a phosphoserine (Ser-384). Lys-399 carries the N6-acetyllysine modification. Coiled-coil stretches lie at residues Lys-399–Asn-426 and Ala-492–Thr-518. 2 disordered regions span residues Glu-528–Ile-553 and Val-565–Asn-586. The span at Lys-531–Tyr-540 shows a compositional bias: acidic residues. Position 593 is a phosphoserine (Ser-593). Positions Ala-620 to Glu-654 are disordered. The segment covering Glu-623–Gly-633 has biased composition (acidic residues). Over residues Val-634–Ser-644 the composition is skewed to low complexity. The residue at position 644 (Ser-644) is a Phosphoserine. Coiled coils occupy residues Glu-652–Gln-772 and Ser-822–Glu-856. A Phosphothreonine modification is found at Thr-857. Phosphoserine occurs at positions 859, 864, 867, and 870. Disordered regions lie at residues Arg-866–Met-885 and Thr-913–Ser-940. Polar residues predominate over residues Ser-870–Ser-879. At Thr-875 the chain carries Phosphothreonine. 4 positions are modified to phosphoserine: Ser-957, Ser-974, Ser-985, and Ser-988. 2 coiled-coil regions span residues Ser-985–Leu-1017 and Gln-1061–His-1086. Disordered stretches follow at residues Arg-1081 to Pro-1105 and Phe-1149 to Glu-1213. A compositionally biased stretch (basic and acidic residues) spans His-1086–Gly-1096. Positions Phe-1149–Gly-1169 are enriched in polar residues. 2 positions are modified to phosphoserine: Ser-1182 and Ser-1185. Positions Glu-1189 to Glu-1198 are enriched in basic and acidic residues. 5 positions are modified to phosphoserine: Ser-1228, Ser-1254, Ser-1257, Ser-1259, and Ser-1260. The disordered stretch occupies residues Glu-1230–Asn-1310. Positions Thr-1268–Leu-1285 are enriched in polar residues. Phosphoserine occurs at positions 1315 and 1317. Positions Ser-1319–Pro-1338 are disordered. At Thr-1466 the chain carries Phosphothreonine. Phosphoserine is present on residues Ser-1571, Ser-1695, Ser-1729, Ser-1766, Ser-1769, Ser-1777, and Ser-1783. Residues Lys-1720 to Val-1943 are disordered. Basic and acidic residues predominate over residues Tyr-1756 to Val-1768. Residues Ile-1784–Gly-1798 show a composition bias toward polar residues. Acidic residues predominate over residues Gly-1800–Pro-1816. Polar residues-rich tracts occupy residues Asp-1818–Glu-1828, Glu-1849–Glu-1858, Glu-1879–Gln-1901, and Ala-1925–Ala-1934. Phosphoserine is present on residues Ser-1959 and Ser-1978.

This sequence belongs to the PCM1 family. Self-associates. Interacts with BBS4, BBS8, CETN3, HAP1, NDE1, NDEL1, MAP1LC3B, GABARAPAL2, and GABARAP. Interacts with CEP131; the interaction increases in response to ultraviolet light (UV) radiation. Associates with microtubule; association to microtubule is reduced in response to cellular stress, such as ultraviolet light (UV) radiation or heat shock, in a process that requires p38 MAP kinase signaling. Interacts with C2CD3. Interacts with CFAP263. Interacts with SSX2IP. Interacts with CCDC13. Interacts with CEP290. Interacts with PARD6A. Interacts with KIAA0753/OFIP, CEP20/FOR20 and OFD1; the interaction with CEP20/FOR20 and OFD1 may be mediated by KIAA0753/OFIP. Interacts with CCDC66. Interacts with CCDC61. Interacts with DZIP1; localizes DZIP1 and the associated BBSome to centriolar satellite. Interacts with CSTPP1, TTLL1, TPGS1 and LRRC49. Interacts with CFAP53. Post-translationally, ubiquitinated. Undergoes monoubiquitination catalyzed by the E3 ubiquitin-protein ligase MIB1 in proliferating cells, preventing cilia formation. Monoubiquitination by MIB1 is inhibited in response to cellular stress, such as ultraviolet light (UV) radiation or heat shock, resulting in cilia formation initiation. In terms of processing, phosphorylated on multiple serine and threonine residues by DYRK3 during the G2-to-M transition, after the nuclear-envelope breakdown. Phosphorylation by DYRK3 promotes disassembly of pericentriolar material. Phosphorylation at Ser-372 mediated by PLK4 is required to maintain the integrity of centriolar satellites. As to expression, expressed in the hippocampus and dentate gyrus, the columnar epithelial cells of bronchioles, the olfactory epithelium, the pericardium and the inner segment of the retina.

Its subcellular location is the cytoplasm. The protein localises to the cytoskeleton. It localises to the microtubule organizing center. The protein resides in the centrosome. It is found in the cytoplasmic granule. Its subcellular location is the centriolar satellite. The protein localises to the cilium basal body. Functionally, required for centrosome assembly and function. Essential for the correct localization of several centrosomal proteins including CEP250, CETN3, PCNT and NEK2. Required to anchor microtubules to the centrosome. Also involved in cilium biogenesis by recruiting the BBSome, a ciliary protein complex involved in cilium biogenesis, to the centriolar satellites. Recruits the tubulin polyglutamylase complex (TPGC) to centriolar satellites. The chain is Pericentriolar material 1 protein from Mus musculus (Mouse).